A 258-amino-acid polypeptide reads, in one-letter code: Cytosolic Fe-S cluster assembly factor Nubp2 homolog (258 aa).

14 to 21 contacts ATP; it reads GKGGVGKS. Positions 188 and 191 each coordinate [4Fe-4S] cluster.

This sequence belongs to the Mrp/NBP35 ATP-binding proteins family. NUBP2/CFD1 subfamily. In terms of assembly, heterotetramer of 2 Nubp1 and 2 Nubp2 chains. Requires [4Fe-4S] cluster as cofactor.

The protein localises to the cytoplasm. Functionally, component of the cytosolic iron-sulfur (Fe/S) protein assembly (CIA) machinery. Required for maturation of extramitochondrial Fe-S proteins. The Nubp1-Nubp2 heterotetramer forms a Fe-S scaffold complex, mediating the de novo assembly of an Fe-S cluster and its transfer to target apoproteins. The sequence is that of Cytosolic Fe-S cluster assembly factor Nubp2 homolog from Drosophila pseudoobscura pseudoobscura (Fruit fly).